The sequence spans 488 residues: MSQSVESRTRIKNERYESGVIPYAKMGYWDADYVIKDTDVLAMFRMTPQKGVDPVECAAAIAGESSTATWTVVWTDLLTACDLYRAKAYRVDPVPGATDQYFAYIAYELDLFEEGSLANLTASIIGNVFGFKAVNALRLEDMRLPIAYLKTFQGPATGVIVERERLDKYGRPLLGATVKPKLGLSGKNYGRVVYEGLKGGLDFLKDDENINSQPFMRWKERFLFGIEGVNRAAAAAGEVKGHYFNVTAGTMEDMYERAEFCKEIGSVICMIDLVIGYTAIQSMAIWARKNSMILHLHRAGNSTYSRQKTHGMNFRVICKWMRMAGVDHIHAGTVVGKLEGDPLMVKGFYNTLLETQTDVNLVQGLFFAQDWAALNKCMPVASGGIHCGQMHQLINYLGDDVVLQFGGGTIGHPDGIQAGATANRVALECMVVARNEGRDYVTEGPQILRNAAKSCGPLQTALDLWKDITFNYASTDTADFVETATANK.

Residues Asn127 and Thr177 each contribute to the substrate site. The active-site Proton acceptor is Lys179. Residue Lys181 participates in substrate binding. Mg(2+) contacts are provided by Lys205, Asp207, and Glu208. Position 205 is an N6-carboxylysine (Lys205). His297 acts as the Proton acceptor in catalysis. Arg298, His330, and Ser382 together coordinate substrate.

Belongs to the RuBisCO large chain family. Type I subfamily. In terms of assembly, heterohexadecamer of 8 large chains and 8 small chains. Mg(2+) is required as a cofactor.

Its subcellular location is the plastid. The protein localises to the chloroplast. It catalyses the reaction 2 (2R)-3-phosphoglycerate + 2 H(+) = D-ribulose 1,5-bisphosphate + CO2 + H2O. The enzyme catalyses D-ribulose 1,5-bisphosphate + O2 = 2-phosphoglycolate + (2R)-3-phosphoglycerate + 2 H(+). RuBisCO catalyzes two reactions: the carboxylation of D-ribulose 1,5-bisphosphate, the primary event in carbon dioxide fixation, as well as the oxidative fragmentation of the pentose substrate in the photorespiration process. Both reactions occur simultaneously and in competition at the same active site. The sequence is that of Ribulose bisphosphate carboxylase large chain from Guillardia theta (Cryptophyte).